Here is a 243-residue protein sequence, read N- to C-terminus: Cytochrome c1, heme protein (243 aa).

Residues 1–201 (GVDSHPPALP…CSNPWWDERK (201 aa)) lie on the Mitochondrial intermembrane side of the membrane. The Cytochrome c domain maps to 5 to 194 (HPPALPWPHF…VTCFLEWCSN (190 aa)). Heme is bound by residues C39, H40, and M159. A helical transmembrane segment spans residues 202 to 221 (LLGYKTIATLAVIAVSSGYY). Over 222–243 (NRFLSGLWRSRRLAFRPFNYSK) the chain is Mitochondrial matrix.

This sequence belongs to the cytochrome c family. Component of the ubiquinol-cytochrome c oxidoreductase (cytochrome b-c1 complex, complex III, CIII), a multisubunit enzyme composed of 3 respiratory subunits cytochrome b, cytochrome c1 and Rieske protein, 2 core protein subunits, and additional low-molecular weight protein subunits. The complex exists as an obligatory dimer and forms supercomplexes (SCs) in the inner mitochondrial membrane with cytochrome c oxidase (complex IV, CIV). The cofactor is heme.

Its subcellular location is the mitochondrion inner membrane. It catalyses the reaction a quinol + 2 Fe(III)-[cytochrome c](out) = a quinone + 2 Fe(II)-[cytochrome c](out) + 2 H(+)(out). Functionally, component of the ubiquinol-cytochrome c oxidoreductase, a multisubunit transmembrane complex that is part of the mitochondrial electron transport chain which drives oxidative phosphorylation. The respiratory chain contains 3 multisubunit complexes succinate dehydrogenase (complex II, CII), ubiquinol-cytochrome c oxidoreductase (cytochrome b-c1 complex, complex III, CIII) and cytochrome c oxidase (complex IV, CIV), that cooperate to transfer electrons derived from NADH and succinate to molecular oxygen, creating an electrochemical gradient over the inner membrane that drives transmembrane transport and the ATP synthase. The cytochrome b-c1 complex catalyzes electron transfer from ubiquinol to cytochrome c, linking this redox reaction to translocation of protons across the mitochondrial inner membrane, with protons being carried across the membrane as hydrogens on the quinol. In the process called Q cycle, 2 protons are consumed from the matrix, 4 protons are released into the intermembrane space and 2 electrons are passed to cytochrome c. Cytochrome c1 is a catalytic core subunit containing a c-type heme. It transfers electrons from the [2Fe-2S] iron-sulfur cluster of the Rieske protein to cytochrome c. The protein is Cytochrome c1, heme protein of Euglena gracilis.